Consider the following 262-residue polypeptide: MTDLQNIEPQALRKLIRDKKVTGHTSGMAKGYIQANVVILPLDYAYDFLKFCFKNPKTCPLLDISEVGEVNFSKYGKDADITTDVGAYRVYENGELIETPTDVKHLFNDQMVSFLIGCSFTFEHALLEAGIPLRHLEEGHNVPMYITNIPAEPAGRFEGNITVSMRPMTMKDAIRATEITTHFKNVHGTPIHIGNPADFGIKDLENPDFGEPVKIKDNEVPVFWGCGVTPQSVALDAKPELIITHAPGHMFITDVKDSELSD.

It belongs to the D-glutamate cyclase family.

The chain is Putative hydro-lyase Sca_2211 from Staphylococcus carnosus (strain TM300).